Consider the following 186-residue polypeptide: Dehydrin Rab18 (186 aa).

Residues 1 to 186 (MASYQNRPGG…IKEKLPGGGR (186 aa)) form a disordered region. Gly residues predominate over residues 30-85 (PMGGGGYGTGGGGGATGGQGYGTGGQGYGSGGQGYGTGGQGYGTGTGTEGFGTGGG). Residues 89–98 (HGQEQLHKES) show a composition bias toward basic and acidic residues. Low complexity predominate over residues 105-116 (MLHRSGSGSSSS). Residues 133 to 144 (KIKEKLPGHHDQ) show a composition bias toward basic and acidic residues. A compositionally biased stretch (gly residues) spans 152–164 (GGMGSGYDAGGYG). Basic and acidic residues predominate over residues 165-186 (GEHHEKKGMMDKIKEKLPGGGR).

It belongs to the plant dehydrin family.

The sequence is that of Dehydrin Rab18 (RAB18) from Arabidopsis thaliana (Mouse-ear cress).